The chain runs to 144 residues: Superoxide dismutase [Mn] (144 aa).

The tract at residues 1 to 22 (GYVNGLESAEETLAENRESGDF) is disordered. Mn(2+) contacts are provided by His-42, Asp-124, and His-128.

This sequence belongs to the iron/manganese superoxide dismutase family. The cofactor is Mn(2+).

The enzyme catalyses 2 superoxide + 2 H(+) = H2O2 + O2. Functionally, destroys superoxide anion radicals which are normally produced within the cells and which are toxic to biological systems. The protein is Superoxide dismutase [Mn] (sod) of Haloarcula hispanica.